Consider the following 221-residue polypeptide: MKLRAVVLGLATLCTSTATFAGMVSTSSNLEFLAIDGQKASKSLGKAKTFTVDDTQNHQVVVRLNEIVGSGSNQSLFESNPVIVTFQGNAEDLVISAPVIRNLDSGDKFNQMPNITVKTKSGNAISAKVDVLKQEGLFPSGNVLNDLAEYNASGAAASVSKFAATTVASSVAVAPAGNAKANKGKVVVQGENVAEQQLQYWFQQADKETQTRFLNWAKSHK.

The signal sequence occupies residues 1-21 (MKLRAVVLGLATLCTSTATFA).

The protein belongs to the UPF0319 family.

This is UPF0319 protein CGSHiEE_03630 from Haemophilus influenzae (strain PittEE).